Reading from the N-terminus, the 214-residue chain is Thioredoxin-like 4, chloroplastic (214 aa).

Over residues 1–20 the composition is skewed to low complexity; it reads MITASLLPLPATSSSSGRRS. The segment at 1 to 68 is disordered; the sequence is MITASLLPLP…STNGSLPGLP (68 aa). Residues 1–71 constitute a chloroplast transit peptide; the sequence is MITASLLPLP…GSLPGLPPVV (71 aa). Positions 21–34 are enriched in pro residues; the sequence is LPPPTTTFPRPPPP. Over residues 42–53 the composition is skewed to low complexity; the sequence is SSSSSSASSTES. In terms of domain architecture, Thioredoxin spans 72–199; sequence VEEEEEEFCP…IIAAIQKYTA (128 aa). Residues Cys-117 and Cys-120 each act as nucleophile in the active site. Cys-117 and Cys-120 are oxidised to a cystine.

It belongs to the thioredoxin family.

It is found in the plastid. The protein resides in the chloroplast. In terms of biological role, probable thiol-disulfide oxidoreductase that may participate in various redox reactions. This chain is Thioredoxin-like 4, chloroplastic, found in Oryza sativa subsp. japonica (Rice).